We begin with the raw amino-acid sequence, 227 residues long: MNHLDRLERKIGYCFNDIALLKQALTHRSAATQHNERLEFLGDSILNFTIAEALYHQFPRCNEGELSRMRATLVREPTLAILARQFELGDYMSLGSGELKNGGFRRESILADCVEAIIGAMSLDQGLAVTTQVIRNWYQQLLAEIKPGDNQKDAKTRLQEYLQGKHLPLPTYEVVNIQGEAHCQIFTVECKVKSAGKIDRTFVAKGSSRRKAEQAAAEQILKELDIK.

Positions 4-126 (LDRLERKIGY…IIGAMSLDQG (123 aa)) constitute an RNase III domain. Residue E39 coordinates Mg(2+). The active site involves D43. Residues D112 and E115 each coordinate Mg(2+). E115 is an active-site residue. Residues 153–226 (DAKTRLQEYL…AEQILKELDI (74 aa)) enclose the DRBM domain.

Belongs to the ribonuclease III family. In terms of assembly, homodimer. Mg(2+) is required as a cofactor.

It is found in the cytoplasm. The enzyme catalyses Endonucleolytic cleavage to 5'-phosphomonoester.. Digests double-stranded RNA. Involved in the processing of primary rRNA transcript to yield the immediate precursors to the large and small rRNAs (23S and 16S). Processes some mRNAs, and tRNAs when they are encoded in the rRNA operon. Processes pre-crRNA and tracrRNA of type II CRISPR loci if present in the organism. In Haemophilus influenzae (strain 86-028NP), this protein is Ribonuclease 3.